The chain runs to 624 residues: Bifunctional 3'-phosphoadenosine 5'-phosphosulfate synthase 1 (624 aa).

Met1 bears the N-acetylmethionine mark. An adenylyl-sulfate kinase region spans residues 1–225 (MELPGSLCKK…VVELLQERDI (225 aa)). N6-acetyllysine is present on Lys12. 62 to 67 (GAGKTT) provides a ligand contact to ATP. Adenosine 5'-phosphosulfate contacts are provided by residues 89-92 (DNIR), Phe101, 106-109 (REEN), 132-133 (IS), Lys171, and 184-185 (GF). ATP contacts are provided by residues Cys207, Cys212, 419–422 (QLRN), 521–525 (GRDPA), and Ala563. The tract at residues 234–624 (VKELYVPENK…AEYYKALEKA (391 aa)) is sulfate adenylyltransferase.

It in the N-terminal section; belongs to the APS kinase family. The protein in the C-terminal section; belongs to the sulfate adenylyltransferase family. In terms of assembly, homodimer.

It carries out the reaction sulfate + ATP + H(+) = adenosine 5'-phosphosulfate + diphosphate. It catalyses the reaction adenosine 5'-phosphosulfate + ATP = 3'-phosphoadenylyl sulfate + ADP + H(+). It participates in sulfur metabolism; sulfate assimilation. Bifunctional enzyme with both ATP sulfurylase and APS kinase activity, which mediates two steps in the sulfate activation pathway. The first step is the transfer of a sulfate group to ATP to yield adenosine 5'-phosphosulfate (APS), and the second step is the transfer of a phosphate group from ATP to APS yielding 3'-phosphoadenylylsulfate (PAPS: activated sulfate donor used by sulfotransferase). In mammals, PAPS is the sole source of sulfate; APS appears to be only an intermediate in the sulfate-activation pathway. Required for normal biosynthesis of sulfated L-selectin ligands in endothelial cells. The chain is Bifunctional 3'-phosphoadenosine 5'-phosphosulfate synthase 1 (PAPSS1) from Cavia porcellus (Guinea pig).